An 83-amino-acid polypeptide reads, in one-letter code: Apolipoprotein C-I (83 aa).

Positions 1 to 26 (MRLFLSLPVLVVVLSIVLEGPAPAQG) are cleaved as a signal peptide.

This sequence belongs to the apolipoprotein C1 family. Synthesized mainly in liver and to a minor degree in intestine. Also found in the lung and spleen.

Its subcellular location is the secreted. In terms of biological role, inhibitor of lipoprotein binding to the low density lipoprotein (LDL) receptor, LDL receptor-related protein, and very low density lipoprotein (VLDL) receptor. Associates with high density lipoproteins (HDL) and the triacylglycerol-rich lipoproteins in the plasma and makes up about 10% of the protein of the VLDL and 2% of that of HDL. Appears to interfere directly with fatty acid uptake and is also the major plasma inhibitor of cholesteryl ester transfer protein (CETP). Binds free fatty acids and reduces their intracellular esterification. Modulates the interaction of APOE with beta-migrating VLDL and inhibits binding of beta-VLDL to the LDL receptor-related protein. The polypeptide is Apolipoprotein C-I (APOC1) (Homo sapiens (Human)).